A 610-amino-acid chain; its full sequence is Manganese lipoxygenase (610 aa).

Positions 1–16 (MVALLIFLGIFTCVET) are cleaved as a signal peptide. The region spanning 47-610 (FTLPNEDDEI…PGVIPFYLSV (564 aa)) is the Lipoxygenase domain. Residues N157 and N259 are each glycosylated (N-linked (GlcNAc...) asparagine). H290 and H295 together coordinate Mn(2+). The N-linked (GlcNAc...) asparagine glycan is linked to N386. H475 and N479 together coordinate Mn(2+). N-linked (GlcNAc...) asparagine glycosylation is present at N540. V610 provides a ligand contact to Mn(2+).

Belongs to the lipoxygenase family. Manganese lipoxygenase subfamily. Requires Mn(2+) as cofactor. Post-translationally, N- and O-glycosylated.

It localises to the secreted. The enzyme catalyses (9Z,12Z)-octadecadienoate + O2 = (11S)-hydroperoxy-(9Z,12Z)-octadecadienoate. It catalyses the reaction (9Z,12Z)-octadecadienoate + O2 = (11R)-hydroperoxy-(9Z,12Z)-octadecadienoate. It carries out the reaction (9Z,12Z)-octadecadienoate + O2 = (13S)-hydroperoxy-(9Z,11E)-octadecadienoate. The catalysed reaction is (9Z,12Z,15Z)-octadecatrienoate + O2 = (11S)-hydroperoxy-(9Z,12Z,15Z)-octadecatrienoate. Functionally, lipoxygenase that metabolizes linoleic and alpha-linolenic acids to 9-, 11- and 13-hydroperoxy fatty acids. Oxidizes linoleic acid to mainly 11R-, 13S- and racemic 9-HPODE, and alpha-linolenic acid to 11-HPOTrE. This is Manganese lipoxygenase from Fusarium oxysporum (strain Fo5176) (Fusarium vascular wilt).